Here is a 334-residue protein sequence, read N- to C-terminus: Forkhead box protein N2 (334 aa).

2 disordered regions span residues 1-52 (MGPV…SGTT) and 83-108 (SPLYDIEGDLSPSGCQTPEKLSASSK). Residues 108–204 (KPPYSFSLLI…QALKKQPFSS (97 aa)) constitute a DNA-binding region (fork-head).

It is found in the nucleus. This chain is Forkhead box protein N2, found in Xenopus tropicalis (Western clawed frog).